The chain runs to 387 residues: Succinate--CoA ligase [ADP-forming] subunit beta (387 aa).

Residues 9 to 245 (KDLLESYGLK…KSQENAKELK (237 aa)) enclose the ATP-grasp domain. ATP contacts are provided by residues Lys46, 53–55 (GRG), Glu100, Tyr103, and Glu108. Positions 200 and 214 each coordinate Mg(2+). Residues Asn265 and 322 to 324 (GIV) contribute to the substrate site.

The protein belongs to the succinate/malate CoA ligase beta subunit family. Heterotetramer of two alpha and two beta subunits. Mg(2+) is required as a cofactor.

The catalysed reaction is succinate + ATP + CoA = succinyl-CoA + ADP + phosphate. It catalyses the reaction GTP + succinate + CoA = succinyl-CoA + GDP + phosphate. Its pathway is carbohydrate metabolism; tricarboxylic acid cycle; succinate from succinyl-CoA (ligase route): step 1/1. Functionally, succinyl-CoA synthetase functions in the citric acid cycle (TCA), coupling the hydrolysis of succinyl-CoA to the synthesis of either ATP or GTP and thus represents the only step of substrate-level phosphorylation in the TCA. The beta subunit provides nucleotide specificity of the enzyme and binds the substrate succinate, while the binding sites for coenzyme A and phosphate are found in the alpha subunit. The chain is Succinate--CoA ligase [ADP-forming] subunit beta from Francisella tularensis subsp. mediasiatica (strain FSC147).